Reading from the N-terminus, the 392-residue chain is Queuine tRNA-ribosyltransferase (392 aa).

The Proton acceptor role is filled by Asp-93. Residues 93–97 (DSGGY), Asp-147, Gln-189, and Gly-216 each bind substrate. The interval 247 to 253 (GVGAPED) is RNA binding. Asp-266 serves as the catalytic Nucleophile. The interval 271-275 (TRVAR) is RNA binding; important for wobble base 34 recognition. Positions 304, 306, 309, and 335 each coordinate Zn(2+).

The protein belongs to the queuine tRNA-ribosyltransferase family. Homodimer. Within each dimer, one monomer is responsible for RNA recognition and catalysis, while the other monomer binds to the replacement base PreQ1. Zn(2+) is required as a cofactor.

It catalyses the reaction 7-aminomethyl-7-carbaguanine + guanosine(34) in tRNA = 7-aminomethyl-7-carbaguanosine(34) in tRNA + guanine. It participates in tRNA modification; tRNA-queuosine biosynthesis. In terms of biological role, catalyzes the base-exchange of a guanine (G) residue with the queuine precursor 7-aminomethyl-7-deazaguanine (PreQ1) at position 34 (anticodon wobble position) in tRNAs with GU(N) anticodons (tRNA-Asp, -Asn, -His and -Tyr). Catalysis occurs through a double-displacement mechanism. The nucleophile active site attacks the C1' of nucleotide 34 to detach the guanine base from the RNA, forming a covalent enzyme-RNA intermediate. The proton acceptor active site deprotonates the incoming PreQ1, allowing a nucleophilic attack on the C1' of the ribose to form the product. After dissociation, two additional enzymatic reactions on the tRNA convert PreQ1 to queuine (Q), resulting in the hypermodified nucleoside queuosine (7-(((4,5-cis-dihydroxy-2-cyclopenten-1-yl)amino)methyl)-7-deazaguanosine). The sequence is that of Queuine tRNA-ribosyltransferase from Dehalococcoides mccartyi (strain ATCC BAA-2100 / JCM 16839 / KCTC 5957 / BAV1).